We begin with the raw amino-acid sequence, 339 residues long: Phosphate acyltransferase (339 aa).

This sequence belongs to the PlsX family. Homodimer. Probably interacts with PlsY.

It localises to the cytoplasm. It carries out the reaction a fatty acyl-[ACP] + phosphate = an acyl phosphate + holo-[ACP]. The protein operates within lipid metabolism; phospholipid metabolism. Its function is as follows. Catalyzes the reversible formation of acyl-phosphate (acyl-PO(4)) from acyl-[acyl-carrier-protein] (acyl-ACP). This enzyme utilizes acyl-ACP as fatty acyl donor, but not acyl-CoA. In Clostridium perfringens (strain ATCC 13124 / DSM 756 / JCM 1290 / NCIMB 6125 / NCTC 8237 / Type A), this protein is Phosphate acyltransferase.